The following is a 951-amino-acid chain: Serine/threonine-protein kinase ATG1 (951 aa).

One can recognise a Protein kinase domain in the interval 22-327 (FTINEEIGKG…FPEYFAHPVV (306 aa)). ATP is bound by residues 28–36 (IGKGSFATV) and Lys-51. The active-site Proton acceptor is Asp-165. Disordered regions lie at residues 343–375 (IITP…PVET), 387–458 (EQAP…YDEQ), 514–573 (HIPK…SSPS), and 924–951 (HQSM…TPPH). Composition is skewed to basic and acidic residues over residues 359-368 (SLRERQRENP) and 432-442 (PRQRDRTERHY). Polar residues-rich tracts occupy residues 547 to 573 (AQGN…SSPS) and 939 to 951 (GGTT…TPPH).

The protein belongs to the protein kinase superfamily. Ser/Thr protein kinase family. APG1/unc-51/ULK1 subfamily. In terms of assembly, homodimer. Forms a ternary complex with ATG13 and ATG17.

The protein localises to the cytoplasm. The protein resides in the preautophagosomal structure membrane. It catalyses the reaction L-seryl-[protein] + ATP = O-phospho-L-seryl-[protein] + ADP + H(+). The enzyme catalyses L-threonyl-[protein] + ATP = O-phospho-L-threonyl-[protein] + ADP + H(+). In terms of biological role, serine/threonine protein kinase involved in the cytoplasm to vacuole transport (Cvt) and found to be essential in autophagy, where it is required for the formation of autophagosomes. Involved in the clearance of protein aggregates which cannot be efficiently cleared by the proteasome. Required for selective autophagic degradation of the nucleus (nucleophagy) as well as for mitophagy which contributes to regulate mitochondrial quantity and quality by eliminating the mitochondria to a basal level to fulfill cellular energy requirements and preventing excess ROS production. Also involved in endoplasmic reticulum-specific autophagic process, in selective removal of ER-associated degradation (ERAD) substrates. Plays a key role in ATG9 and ATG23 cycling through the pre-autophagosomal structure and is necessary to promote ATG18 binding to ATG9 through phosphorylation of ATG9. Catalyzes phosphorylation of ATG4, decreasing the interaction between ATG4 and ATG8 and impairing deconjugation of PE-conjugated forms of ATG8. This is Serine/threonine-protein kinase ATG1 from Sclerotinia sclerotiorum (strain ATCC 18683 / 1980 / Ss-1) (White mold).